A 177-amino-acid chain; its full sequence is SKP1-like protein 15 (177 aa).

Positions 108-167 (ILAANYLNVEGLLGLTCQTVADYIKDKTPEEVRELFNIENDFTHEEEEEAIRKENAWAFE) are interaction with the F-box domain of F-box proteins.

It belongs to the SKP1 family. As to quaternary structure, part of a SCF (SKP1-cullin-F-box) protein ligase complex. In terms of tissue distribution, expressed at low levels in seedlings and leaves.

It localises to the nucleus. It participates in protein modification; protein ubiquitination. In terms of biological role, involved in ubiquitination and subsequent proteasomal degradation of target proteins. Together with CUL1, RBX1 and a F-box protein, it forms a SCF E3 ubiquitin ligase complex. The functional specificity of this complex depends on the type of F-box protein. In the SCF complex, it serves as an adapter that links the F-box protein to CUL1. This Arabidopsis thaliana (Mouse-ear cress) protein is SKP1-like protein 15 (ASK15).